Consider the following 23-residue polypeptide: NADH-ubiquinone oxidoreductase 29 kDa subunit (23 aa).

As to quaternary structure, complex I is composed of about 45 different subunits.

It is found in the mitochondrion inner membrane. It carries out the reaction a ubiquinone + NADH + 5 H(+)(in) = a ubiquinol + NAD(+) + 4 H(+)(out). Functionally, transfer of electrons from NADH to the respiratory chain. The immediate electron acceptor for the enzyme is believed to be ubiquinone. The sequence is that of NADH-ubiquinone oxidoreductase 29 kDa subunit from Solanum tuberosum (Potato).